Reading from the N-terminus, the 233-residue chain is Putative N-acetylmannosamine-6-phosphate 2-epimerase (233 aa).

This sequence belongs to the NanE family.

The enzyme catalyses an N-acyl-D-glucosamine 6-phosphate = an N-acyl-D-mannosamine 6-phosphate. It functions in the pathway amino-sugar metabolism; N-acetylneuraminate degradation; D-fructose 6-phosphate from N-acetylneuraminate: step 3/5. Functionally, converts N-acetylmannosamine-6-phosphate (ManNAc-6-P) to N-acetylglucosamine-6-phosphate (GlcNAc-6-P). The chain is Putative N-acetylmannosamine-6-phosphate 2-epimerase from Yersinia pestis bv. Antiqua (strain Antiqua).